A 179-amino-acid chain; its full sequence is MSSRVLTPDVVGIDALVHDHQTVLAKAEGGVVAVFANNAPAFYAVTPARLAELLALEEKLARPGSDVALDDQLYQEPQAAPVAVPMGKFAMYPDWQPDADFIRLAALWGVALRAPVTTEELASFIAYWQAEGKVFHHVQWQQKLARSLQIGRASNGGLPKRDVNTVSEPDSQIPPGFRG.

The segment at 156–179 (GGLPKRDVNTVSEPDSQIPPGFRG) is disordered.

It belongs to the DnaT family. Homooligomerizes. Interacts with PriB. Component of the replication restart primosome. Primosome assembly occurs via a 'hand-off' mechanism. PriA binds to replication forks, subsequently PriB then DnaT bind; DnaT then displaces ssDNA to generate the helicase loading substrate.

Functionally, involved in the restart of stalled replication forks, which reloads the replicative helicase on sites other than the origin of replication. Can function in multiple replication restart pathways. Displaces ssDNA from a PriB-ssDNA complex. Probably forms a spiral filament on ssDNA. This Escherichia coli O17:K52:H18 (strain UMN026 / ExPEC) protein is Replication restart protein DnaT.